A 272-amino-acid polypeptide reads, in one-letter code: Elongation factor Ts (272 aa).

The segment at 76 to 79 (TDFV) is involved in Mg(2+) ion dislocation from EF-Tu.

Belongs to the EF-Ts family.

The protein resides in the cytoplasm. Its function is as follows. Associates with the EF-Tu.GDP complex and induces the exchange of GDP to GTP. It remains bound to the aminoacyl-tRNA.EF-Tu.GTP complex up to the GTP hydrolysis stage on the ribosome. The polypeptide is Elongation factor Ts (Corynebacterium jeikeium (strain K411)).